Here is a 523-residue protein sequence, read N- to C-terminus: REST corepressor 2 (523 aa).

Residues 1–43 (MPSVMEKPSAGSGILSRSRAKTAPNGGQPHSEDDSSEEEHSHD) form a disordered region. The segment covering 30-43 (HSEDDSSEEEHSHD) has biased composition (basic and acidic residues). Phosphoserine is present on residues Ser-31, Ser-35, Ser-36, and Ser-63. The ELM2 domain maps to 44–129 (SMIRVGTNYQ…KSLADLANFT (86 aa)). Lys-88 participates in a covalent cross-link: Glycyl lysine isopeptide (Lys-Gly) (interchain with G-Cter in SUMO2). In terms of domain architecture, SANT 1 spans 130-181 (PFPDEWTVEDKVLFEQAFGFHGKCFQRIQQMLPDKLIPSLVKYYYSWKKTRS). Residues 185–265 (VMDRQARRLG…RRRPPKGMYL (81 aa)) are disordered. The residue at position 202 (Ser-202) is a Phosphoserine. Residues 248-260 (YRHHPLRTRRRPP) show a composition bias toward basic residues. A coiled-coil region spans residues 283–314 (TLRGLDSQLISLKRQVQSMKQTNSSLRQALEG). An SANT 2 domain is found at 327 to 378 (KFNSRWTTDEQLLAVQAIRRYGKDFGAIAEVIGNKTLTQVKTFFVSYRRRFN). Residues 387 to 523 (EAEQDGAPTA…AQLEPPAPSL (137 aa)) are disordered. A compositionally biased stretch (pro residues) spans 432 to 459 (SVPPAPPPPPPPTSLSQPPPLLRPPLPT). Residues 460 to 482 (APTLLRQPPPLQQGRFLQPRLAP) are compositionally biased toward low complexity. At Arg-479 the chain carries Asymmetric dimethylarginine.

It belongs to the CoREST family.

It is found in the nucleus. May act as a component of a corepressor complex that represses transcription. This chain is REST corepressor 2 (Rcor2), found in Rattus norvegicus (Rat).